The following is a 328-amino-acid chain: Gonadotropin-releasing hormone receptor (328 aa).

Topologically, residues 1 to 38 are extracellular; the sequence is MANSDSPEQNENHCSAINSSIPLTPGSLPTLTLSGKIR. A glycan (N-linked (GlcNAc...) asparagine) is linked at asparagine 18. Residues 39–58 form a helical membrane-spanning segment; sequence VTVTFFLFLLSTIFNTSFLL. The Cytoplasmic segment spans residues 59-77; sequence KLQNWTQRKEKRKKLSRMK. Residues 78 to 97 traverse the membrane as a helical segment; that stretch reads LLLKHLTLANLLETLIVMPL. Over 98-115 the chain is Extracellular; the sequence is DGMWNITVQWYAGELLCK. An N-linked (GlcNAc...) asparagine glycan is attached at asparagine 102. Cysteine 114 and cysteine 196 are disulfide-bonded. The helical transmembrane segment at 116-137 threads the bilayer; sequence VLSYLKLFSMYAPAFMMVVISL. At 138–164 the chain is on the cytoplasmic side; sequence DRSLAITKPLAVKSNSKLGQFMIGLAW. The helical transmembrane segment at 165–184 threads the bilayer; it reads LLSSIFAGPQLYIFGMIHLA. Residues 185–212 are Extracellular-facing; that stretch reads DDSGQTEGFSQCVTHCSFPQWWHQAFYN. Residues 213–232 traverse the membrane as a helical segment; the sequence is FFTFSCLFIIPLLIMVICNA. The Cytoplasmic portion of the chain corresponds to 233–281; the sequence is KIIFTLTRVLHQDPHKLQLNQSKNNIPRARLRTLKMTVAFATSFTVCWT. The helical transmembrane segment at 282 to 300 threads the bilayer; sequence PYYVLGIWYWFDPDMVNRV. The Extracellular segment spans residues 301–306; it reads SDPVNH. Residues 307 to 326 form a helical membrane-spanning segment; sequence FFFLFAFLNPCFDPLIYGYF. At 327 to 328 the chain is on the cytoplasmic side; that stretch reads SL.

This sequence belongs to the G-protein coupled receptor 1 family.

It localises to the cell membrane. Functionally, receptor for gonadotropin releasing hormone (GnRH) that mediates the action of GnRH to stimulate the secretion of the gonadotropic hormones luteinizing hormone (LH) and follicle-stimulating hormone (FSH). This receptor mediates its action by association with G-proteins that activate a phosphatidylinositol-calcium second messenger system. The chain is Gonadotropin-releasing hormone receptor (GNRHR) from Bos taurus (Bovine).